The following is a 363-amino-acid chain: MSRFVPYLCAEKMKELRENASAIVAPGKGLLAADESTNTIGKRFAAINLENTEENRRAYRELLFTTDPEFAKHISGVILFHETVYQKTKDGKPFVELLRERGVLPGIKVDLGVVPLGGTADECTTQGLDNLAQRCAQYYNDGCRFAKWRCVLKISSHNPSYLAMLENANVLARYAFICQQNGLVPIVEPEVLPDGDHDLETAQRVTEQVLSFVYKALADHHVYLEGTLLKPNMVTCGQSCTKKYSVEDNARATVEALQRTVPVAVPGVVFLSGGQSELDATRNLNAINKYPGKKPWALSFSFGRALQASAIAAWQGKPENVKAGQAEFLQLAKANGAASLGKFEGELKTAAGQKSLFVANHAY.

Residues Arg56 and Lys147 each coordinate substrate. Residue Glu188 is the Proton acceptor of the active site. Catalysis depends on Lys230, which acts as the Schiff-base intermediate with dihydroxyacetone-P.

It belongs to the class I fructose-bisphosphate aldolase family.

It catalyses the reaction beta-D-fructose 1,6-bisphosphate = D-glyceraldehyde 3-phosphate + dihydroxyacetone phosphate. Its pathway is carbohydrate degradation; glycolysis; D-glyceraldehyde 3-phosphate and glycerone phosphate from D-glucose: step 4/4. The polypeptide is Fructose-bisphosphate aldolase (FBPA) (Echinococcus multilocularis (Fox tapeworm)).